Here is a 239-residue protein sequence, read N- to C-terminus: Pyridoxine 5'-phosphate synthase (239 aa).

Asn-7 is a binding site for 3-amino-2-oxopropyl phosphate. 9 to 10 contacts 1-deoxy-D-xylulose 5-phosphate; that stretch reads DH. Arg-18 serves as a coordination point for 3-amino-2-oxopropyl phosphate. The active-site Proton acceptor is His-43. 1-deoxy-D-xylulose 5-phosphate-binding residues include Arg-45 and His-50. Catalysis depends on Glu-70, which acts as the Proton acceptor. Thr-100 serves as a coordination point for 1-deoxy-D-xylulose 5-phosphate. His-191 functions as the Proton donor in the catalytic mechanism. 3-amino-2-oxopropyl phosphate-binding positions include Gly-192 and 213–214; that span reads GH.

The protein belongs to the PNP synthase family. In terms of assembly, homooctamer; tetramer of dimers.

It is found in the cytoplasm. The enzyme catalyses 3-amino-2-oxopropyl phosphate + 1-deoxy-D-xylulose 5-phosphate = pyridoxine 5'-phosphate + phosphate + 2 H2O + H(+). It participates in cofactor biosynthesis; pyridoxine 5'-phosphate biosynthesis; pyridoxine 5'-phosphate from D-erythrose 4-phosphate: step 5/5. Catalyzes the complicated ring closure reaction between the two acyclic compounds 1-deoxy-D-xylulose-5-phosphate (DXP) and 3-amino-2-oxopropyl phosphate (1-amino-acetone-3-phosphate or AAP) to form pyridoxine 5'-phosphate (PNP) and inorganic phosphate. This Gloeobacter violaceus (strain ATCC 29082 / PCC 7421) protein is Pyridoxine 5'-phosphate synthase.